The sequence spans 390 residues: Peroxisomal sarcosine oxidase (390 aa).

9 to 39 contacts FAD; sequence DAIVIGAGIQGCFTAYHLAKHRKRILLLEQF. Position 126 is an N6-acetyllysine (lysine 126). Cysteine 319 is modified (S-8alpha-FAD cysteine). Positions 388–390 match the Microbody targeting signal motif; the sequence is AHL.

This sequence belongs to the MSOX/MTOX family. The cofactor is FAD. In terms of tissue distribution, expressed in the liver and kidney.

Its subcellular location is the peroxisome. It carries out the reaction sarcosine + O2 + H2O = formaldehyde + glycine + H2O2. The enzyme catalyses L-pipecolate + O2 = L-1-piperideine-6-carboxylate + H2O2 + H(+). In terms of biological role, metabolizes sarcosine and L-pipecolic acid. The sequence is that of Peroxisomal sarcosine oxidase (PIPOX) from Homo sapiens (Human).